A 459-amino-acid polypeptide reads, in one-letter code: UNC93-like protein 1 (459 aa).

Residues 1–26 (MNVRDEGKTTAEKHGGGEENKSPENK) are disordered. 11 helical membrane passes run 38-58 (LMGF…GMGG), 73-93 (AVYT…NVLG), 96-116 (LTLA…LYYN), 122-142 (AFAI…WAGE), 159-179 (IALF…IPFI), 195-215 (YIAF…ILPA), 251-271 (LLIV…FNNV), 287-307 (FYWG…DFSF), 314-334 (GFTG…GGLA), 355-375 (GIEF…DAMY), and 425-445 (LIVN…LVYF).

This sequence belongs to the unc-93 family.

The protein localises to the membrane. The sequence is that of UNC93-like protein 1 from Arabidopsis thaliana (Mouse-ear cress).